The sequence spans 203 residues: Small ribosomal subunit protein uS4c (203 aa).

Residues 18–42 are disordered; sequence LPGLTSKRPKNRKDSMNMNRSSSRK. Residues 33-42 are compositionally biased toward polar residues; it reads MNMNRSSSRK. Residues 91–152 form the S4 RNA-binding domain; the sequence is MRLDNIIFRL…QPRLRAIIKK (62 aa).

Belongs to the universal ribosomal protein uS4 family. As to quaternary structure, part of the 30S ribosomal subunit. Contacts protein S5. The interaction surface between S4 and S5 is involved in control of translational fidelity.

The protein localises to the plastid. It localises to the chloroplast. One of the primary rRNA binding proteins, it binds directly to 16S rRNA where it nucleates assembly of the body of the 30S subunit. Its function is as follows. With S5 and S12 plays an important role in translational accuracy. The protein is Small ribosomal subunit protein uS4c (rps4) of Pinus koraiensis (Korean pine).